Consider the following 234-residue polypeptide: Ribosomal RNA small subunit methyltransferase G (234 aa).

Positions 85, 90, and 155 each coordinate S-adenosyl-L-methionine.

The protein belongs to the methyltransferase superfamily. RNA methyltransferase RsmG family.

It is found in the cytoplasm. It catalyses the reaction guanosine(527) in 16S rRNA + S-adenosyl-L-methionine = N(7)-methylguanosine(527) in 16S rRNA + S-adenosyl-L-homocysteine. Its function is as follows. Specifically methylates the N7 position of guanine in position 527 of 16S rRNA. In Rhodopseudomonas palustris (strain BisB18), this protein is Ribosomal RNA small subunit methyltransferase G.